The sequence spans 447 residues: Chaperone protein dnaJ A7B, chloroplastic (447 aa).

The N-terminal 86 residues, 1-86, are a transit peptide targeting the chloroplast; sequence MALLQFGGTL…HRRSSRFIVR (86 aa). Residues 90–154 enclose the J domain; the sequence is DFYSTLGVSR…EKRSIYDKYG (65 aa). The segment at 217 to 298 adopts a CR-type zinc-finger fold; the sequence is GVEKEIEITR…CGGDGRVRKT (82 aa). Zn(2+)-binding residues include cysteine 230, cysteine 233, cysteine 247, cysteine 250, cysteine 273, cysteine 276, cysteine 286, and cysteine 289. 4 CXXCXGXG motif repeats span residues 230-237, 247-254, 273-280, and 286-293; these read CNTCDGTG, CKTCGGQG, CNTCGGTG, and CNTCGGDG.

The protein belongs to the DnaJ family. In terms of assembly, interacts with PCNA. In terms of tissue distribution, expressed in roots, stems, leaves and panicles.

The protein localises to the plastid. Its subcellular location is the chloroplast. Plays pivotal roles in chloroplast development. Is essential for the regulation of chloroplast development and differentiation. The polypeptide is Chaperone protein dnaJ A7B, chloroplastic (Oryza sativa subsp. japonica (Rice)).